The chain runs to 471 residues: MALNKSMHPRNRYKDKPPDFVYLASKYPEFQKHVQTTLTGRVTLNFKDPEAVRALTCTLLKEDFGLTIEIPLERLIPTVPLRLNYIHWVEDLIGGQGNPQRGIDIGTGASCIYPLLGATMNGWFFLATEVDDICFNYAKKNVEQNHLAELIKVVKVPQKTLLMDALKEESIVYDFCMCNPPFFANQLEAKGVNSRNSRRPPPSSINTGGVTEIMAEGGELEFVKRVIHDSLQLKKRLRWYSCMLGKKCSLAPLKDELRKQGVAKVTHTEFCQGRTMRWALAWSFYDDVPVPSPPCKKRKLEKARKPLTFTVLKATVAELQAQTPHSSPTESVSAWLENILTDLKVLHKRVPGGEVELSLFLTAVENTWIHSRQKRREQGRHLRELPRAQEPPSEETSVTEQQQQPDIPPESPANAEALQHFLFKCLVNVKQEEEKDVLVEMHWVEGQNKDLMNQLCTCLKNALFRQVAKPT.

An RNA-binding region spans residues 17–20 (PPDF). Residues arginine 82, glycine 106, serine 110, glutamate 129, threonine 160, and asparagine 179 each contribute to the S-adenosyl-L-methionine site. The interval 159-163 (KTLLM) is K-loop. RNA-binding stretches follow at residues 194–206 (SRNS…SSIN), 245–249 (GKKCS), and 272–278 (QGRTMRW). VCR stretches follow at residues 284–390 (FYDD…RAQE) and 421–470 (FLFK…VAKP). Residues 375-412 (RREQGRHLRELPRAQEPPSEETSVTEQQQQPDIPPESP) are disordered.

Belongs to the methyltransferase superfamily. METTL16/RlmF family.

It is found in the nucleus. The protein resides in the cytoplasm. The enzyme catalyses adenosine in U6 snRNA + S-adenosyl-L-methionine = N(6)-methyladenosine in U6 snRNA + S-adenosyl-L-homocysteine + H(+). The catalysed reaction is an adenosine in mRNA + S-adenosyl-L-methionine = an N(6)-methyladenosine in mRNA + S-adenosyl-L-homocysteine + H(+). Methyltransferase activity is autoinhibited by the K-loop region that blocks S-adenosyl-L-methionine-binding. Upon activation, K-loop changes conformation, allowing S-adenosyl-L-methionine-binding and subsequent methyltransferase activity. mRNA N6-adenosine-methyltransferase activity is inhibited by zinc. In terms of biological role, RNA N6-methyltransferase that methylates adenosine residues at the N(6) position of a subset of RNAs and is involved in S-adenosyl-L-methionine homeostasis by regulating expression of MAT2A transcripts. Able to N6-methylate a subset of mRNAs and U6 small nuclear RNAs (U6 snRNAs). In contrast to the METTL3-METTL14 heterodimer, only able to methylate a limited number of RNAs: requires both a 5'UACAGAGAA-3' nonamer sequence and a specific RNA structure. Plays a key role in S-adenosyl-L-methionine homeostasis by mediating N6-methylation of MAT2A mRNAs, altering splicing of MAT2A transcripts: in presence of S-adenosyl-L-methionine, binds the 3'-UTR region of MAT2A mRNA and specifically N6-methylates the first hairpin of MAT2A mRNA, impairing MAT2A splicing and protein expression. In S-adenosyl-L-methionine-limiting conditions, binds the 3'-UTR region of MAT2A mRNA but stalls due to the lack of a methyl donor, preventing N6-methylation and promoting expression of MAT2A. In addition to mRNAs, also able to mediate N6-methylation of U6 small nuclear RNA (U6 snRNA): specifically N6-methylates adenine in position 43 of U6 snRNAs. The protein is RNA N(6)-adenosine-methyltransferase mettl16 (mettl16) of Danio rerio (Zebrafish).